We begin with the raw amino-acid sequence, 88 residues long: Putative membrane protein insertion efficiency factor (88 aa).

The protein belongs to the UPF0161 family.

It localises to the cell inner membrane. Functionally, could be involved in insertion of integral membrane proteins into the membrane. This chain is Putative membrane protein insertion efficiency factor, found in Coxiella burnetii (strain Dugway 5J108-111).